The chain runs to 147 residues: MAFKRINKELTDLGRDPPSSCSAGPVGEDLFHWQATIMGPGDSPYSGGVFFLAIHFPTDYPFKPPKVNFTTRIYHPNINSNGSICLDILRDQWSPALTISKVLLSICSMLTDPNPDEPLVPEIAHVYKTDRARYEATAREWTRKYAI.

In terms of domain architecture, UBC core spans 1–147 (MAFKRINKEL…AREWTRKYAI (147 aa)). Residue Cys-107 is the Glycyl thioester intermediate of the active site.

The protein belongs to the ubiquitin-conjugating enzyme family.

It catalyses the reaction S-ubiquitinyl-[E1 ubiquitin-activating enzyme]-L-cysteine + [E2 ubiquitin-conjugating enzyme]-L-cysteine = [E1 ubiquitin-activating enzyme]-L-cysteine + S-ubiquitinyl-[E2 ubiquitin-conjugating enzyme]-L-cysteine.. Its pathway is protein modification; protein ubiquitination. Its function is as follows. Catalyzes the covalent attachment of ubiquitin to other proteins. May also mediate selective proteolysis pathways. This chain is Ubiquitin-conjugating enzyme E2-16 kDa (UBC1), found in Colletotrichum gloeosporioides (Anthracnose fungus).